Reading from the N-terminus, the 198-residue chain is E3 ubiquitin-protein ligase rnf152 (198 aa).

The segment at 12–55 adopts an RING-type zinc-finger fold; it reads CQICFNYFSQRRLPKLLHCQHTCCSVCLSQMRLSQREIRCPWCR. Residues 162–182 traverse the membrane as a helical segment; that stretch reads TGVCTVLLVAFILIFLLGIVL.

It belongs to the RNF152 family.

Its subcellular location is the lysosome membrane. It catalyses the reaction S-ubiquitinyl-[E2 ubiquitin-conjugating enzyme]-L-cysteine + [acceptor protein]-L-lysine = [E2 ubiquitin-conjugating enzyme]-L-cysteine + N(6)-ubiquitinyl-[acceptor protein]-L-lysine.. Its pathway is protein modification; protein ubiquitination. E3 ubiquitin-protein ligase that acts as a negative regulator of mTORC1 signaling by mediating ubiquitination of RagA/RRAGA and RHEB. Catalyzes 'Lys-63'-linked polyubiquitination of RagA/RRAGA in response to amino acid starvation, thereby regulating mTORC1 signaling. Also mediates monoubiquitination of RHEB, promoting its association with the TSC-TBC complex and subsequent inhibition. Also mediates 'Lys-48'-linked polyubiquitination of target proteins and their subsequent targeting to the proteasome for degradation. In Danio rerio (Zebrafish), this protein is E3 ubiquitin-protein ligase rnf152.